Here is a 507-residue protein sequence, read N- to C-terminus: uncharacterized protein (507 aa).

Helical transmembrane passes span 46–66 (WIVL…WIGY), 83–103 (AWLS…AMWA), 112–132 (AVLI…ISSL), 141–161 (FPIC…IMFL), 181–201 (IGVM…PAIV), 207–227 (VIWL…IATF), 263–283 (IILL…YTVM), 299–319 (VCAA…SIFV), 328–348 (TLKI…QLTL), 354–374 (VILG…YPIG), 389–409 (TSTG…VFIM), and 442–462 (MSIM…VVLF). Over residues 477 to 493 (ATADKAKELSNQNKDRI) the composition is skewed to basic and acidic residues. The tract at residues 477 to 507 (ATADKAKELSNQNKDRITLQAESAVEPLQKK) is disordered.

The protein resides in the membrane. This is an uncharacterized protein from Caenorhabditis elegans.